The sequence spans 314 residues: Ketimine reductase mu-crystallin (314 aa).

Arg47 is a binding site for 3,3',5-triiodo-L-thyronine. Ser91, His92, Arg119, Ala144, Val146, Gln147, Asn168, Arg169, Thr170, Asn173, Thr205, Met206, and Val226 together coordinate NADPH. Residue Glu257 participates in 3,3',5-triiodo-L-thyronine binding. NADPH is bound at residue Ser292.

Belongs to the ornithine cyclodeaminase/mu-crystallin family. In terms of assembly, homodimer. Binds the thyroid hormone triiodothyronine (T3); T3 binding inhibits enzymatic activity. As to expression, expressed at high abundance in lens, but outside the lens it is preferentially expressed in neural tissues, retina and brain.

The protein localises to the cytoplasm. It carries out the reaction L-pipecolate + NADP(+) = Delta(1)-piperideine-2-carboxylate + NADPH + H(+). The enzyme catalyses L-pipecolate + NAD(+) = Delta(1)-piperideine-2-carboxylate + NADH + H(+). The catalysed reaction is L-proline + NADP(+) = 1-pyrroline-2-carboxylate + NADPH + H(+). It catalyses the reaction L-proline + NAD(+) = 1-pyrroline-2-carboxylate + NADH + H(+). It carries out the reaction (3R)-1,4-thiomorpholine-3-carboxylate + NAD(+) = 3,4-dehydrothiomorpholine-3-carboxylate + NADH + 2 H(+). The enzyme catalyses (3R)-1,4-thiomorpholine-3-carboxylate + NADP(+) = 3,4-dehydrothiomorpholine-3-carboxylate + NADPH + 2 H(+). The catalysed reaction is (S)-cystathionine ketimine + NADH + 2 H(+) = (3R,5S)-2,3,5,6,7-pentahydro-1,4-thiazepine-3,5-dicarboxylate + NAD(+). It catalyses the reaction (S)-cystathionine ketimine + NADPH + 2 H(+) = (3R,5S)-2,3,5,6,7-pentahydro-1,4-thiazepine-3,5-dicarboxylate + NADP(+). It carries out the reaction (R)-lanthionine ketimine + NADPH + 2 H(+) = (3R,5R)-1,4-thiomorpholine-3,5-dicarboxylate + NADP(+). The enzyme catalyses Delta(2)-thiazoline-2-carboxylate + NADPH + 2 H(+) = L-thiazolidine-2-carboxylate + NADP(+). Functionally, catalyzes the NAD(P)H-dependent reduction of imine double bonds of a number of cyclic ketimine substrates, including sulfur-containing cyclic ketimines. Under physiological conditions, it efficiently catalyzes delta(1)-piperideine-2-carboxylate (P2C) and delta(1)-pyrroline-2-carboxylate (Pyr2C) reduction, suggesting a central role in lysine and glutamate metabolism. Additional substrates are delta(2)-thiazoline-2-carboxylate (T2C), 3,4-dehydrothiomorpholine-3-carboxylate (AECK), and (R)-lanthionine ketimine (LK) that is reduced at very low rate compared to other substrates. Also catalyzes the NAD(P)H-dependent reduction of (S)-cystathionine ketimine (CysK). This chain is Ketimine reductase mu-crystallin (CRYM), found in Macropus fuliginosus (Western gray kangaroo).